Here is a 268-residue protein sequence, read N- to C-terminus: Undecaprenyl-diphosphatase (268 aa).

Helical transmembrane passes span 41-61 (LAYSLGLFLEAASVLAALIYF), 81-101 (WLTYVIVTTAATGAVGIPLYM), 106-126 (YLLLGASAGWLMVVLGVAVIF), 146-166 (MTLGHMALVGLAQALSVLPGI), 191-211 (FVLVPIAGLGATALAYLSEGG), 213-233 (VATPEVITAMLIGLVVSLVTI), and 245-265 (VTLVNIVVGTLAIAGGITRIL).

It belongs to the UppP family.

It is found in the cell membrane. It carries out the reaction di-trans,octa-cis-undecaprenyl diphosphate + H2O = di-trans,octa-cis-undecaprenyl phosphate + phosphate + H(+). Catalyzes the dephosphorylation of undecaprenyl diphosphate (UPP). This Pyrobaculum islandicum (strain DSM 4184 / JCM 9189 / GEO3) protein is Undecaprenyl-diphosphatase.